The primary structure comprises 101 residues: Chaperone modulatory protein CbpM (101 aa).

The protein belongs to the CbpM family.

In terms of biological role, interacts with CbpA and inhibits both the DnaJ-like co-chaperone activity and the DNA binding activity of CbpA. Together with CbpA, modulates the activity of the DnaK chaperone system. Does not inhibit the co-chaperone activity of DnaJ. This Salmonella agona (strain SL483) protein is Chaperone modulatory protein CbpM.